We begin with the raw amino-acid sequence, 689 residues long: Armadillo-like helical domain-containing protein 3 (689 aa).

Residues 520–538 (IFTLALMIVNLFNMFITYG) traverse the membrane as a helical segment.

It belongs to the ARMH3 family. In terms of assembly, interacts with PI4KB. Interacts with GBF1.

Its subcellular location is the golgi apparatus membrane. It is found in the cytoplasm. Its function is as follows. Involved in GBF1 recruitment, Golgi maintenance and protein secretion. This is Armadillo-like helical domain-containing protein 3 from Homo sapiens (Human).